Here is a 117-residue protein sequence, read N- to C-terminus: Large ribosomal subunit protein bL20 (117 aa).

It belongs to the bacterial ribosomal protein bL20 family.

Its function is as follows. Binds directly to 23S ribosomal RNA and is necessary for the in vitro assembly process of the 50S ribosomal subunit. It is not involved in the protein synthesizing functions of that subunit. The sequence is that of Large ribosomal subunit protein bL20 from Gloeothece citriformis (strain PCC 7424) (Cyanothece sp. (strain PCC 7424)).